The following is a 230-amino-acid chain: 5'-methylthioadenosine/S-adenosylhomocysteine nucleosidase (230 aa).

The Proton acceptor role is filled by Glu12. Residues Gly78, Ile153, and 174–175 (ME) contribute to the substrate site. Asp198 (proton donor) is an active-site residue.

It belongs to the PNP/UDP phosphorylase family. MtnN subfamily.

It carries out the reaction S-adenosyl-L-homocysteine + H2O = S-(5-deoxy-D-ribos-5-yl)-L-homocysteine + adenine. It catalyses the reaction S-methyl-5'-thioadenosine + H2O = 5-(methylsulfanyl)-D-ribose + adenine. The enzyme catalyses 5'-deoxyadenosine + H2O = 5-deoxy-D-ribose + adenine. Its pathway is amino-acid biosynthesis; L-methionine biosynthesis via salvage pathway; S-methyl-5-thio-alpha-D-ribose 1-phosphate from S-methyl-5'-thioadenosine (hydrolase route): step 1/2. In terms of biological role, catalyzes the irreversible cleavage of the glycosidic bond in both 5'-methylthioadenosine (MTA) and S-adenosylhomocysteine (SAH/AdoHcy) to adenine and the corresponding thioribose, 5'-methylthioribose and S-ribosylhomocysteine, respectively. Also cleaves 5'-deoxyadenosine, a toxic by-product of radical S-adenosylmethionine (SAM) enzymes, into 5-deoxyribose and adenine. The sequence is that of 5'-methylthioadenosine/S-adenosylhomocysteine nucleosidase from Shewanella frigidimarina (strain NCIMB 400).